Here is a 654-residue protein sequence, read N- to C-terminus: Translation factor GUF1, mitochondrial (654 aa).

Positions 57–237 (ENYRNFSIVA…SVIKNIPSPV (181 aa)) constitute a tr-type G domain. GTP is bound by residues 66–73 (AHVDHGKS), 130–134 (DTPGH), and 184–187 (NKID).

Belongs to the TRAFAC class translation factor GTPase superfamily. Classic translation factor GTPase family. LepA subfamily.

It localises to the mitochondrion inner membrane. The enzyme catalyses GTP + H2O = GDP + phosphate + H(+). In terms of biological role, promotes mitochondrial protein synthesis. May act as a fidelity factor of the translation reaction, by catalyzing a one-codon backward translocation of tRNAs on improperly translocated ribosomes. Binds to mitochondrial ribosomes in a GTP-dependent manner. The chain is Translation factor GUF1, mitochondrial from Candida dubliniensis (strain CD36 / ATCC MYA-646 / CBS 7987 / NCPF 3949 / NRRL Y-17841) (Yeast).